Consider the following 686-residue polypeptide: Osmo-dependent choline transporter BetT2 (686 aa).

At 1-22 (MATDNPRAVDDQETHPKDRLNR) the chain is on the cytoplasmic side. Residues 23-43 (VVFYVSALIILIFSLTTILFN) form a helical membrane-spanning segment. The Periplasmic segment spans residues 44–60 (DFANRALNQVLDWVSST). The chain crosses the membrane as a helical span at residues 61 to 81 (FSWYYLLAATLYMVFVIFIAC). The Cytoplasmic segment spans residues 82–100 (SRYGNIKLGPKHSKPEFSL). A helical transmembrane segment spans residues 101–121 (LSWSAMLFSAGIGIDLMFFSV). The Periplasmic portion of the chain corresponds to 122 to 150 (AEPLSHYMHPPVGEGQTYEAARQGMVWTL). Residues 151-171 (FHYGLTGWCMYALIGMALGYF) traverse the membrane as a helical segment. Topologically, residues 172–203 (SYRYNLPLTIRSALYPIFGKKINGPIGHSVDT) are cytoplasmic. A helical membrane pass occupies residues 204-224 (AAVIGTIFGIATTCGIGVVQL). The Periplasmic segment spans residues 225–237 (NYGLHVLFDLPEN). Residues 238-258 (LWVQTALILVAVIITIISVTS) form a helical membrane-spanning segment. At 259-265 (GVNKGLR) the chain is on the cytoplasmic side. Residues 266 to 286 (ILSEVNIYVSVGLMLFILFLG) form a helical membrane-spanning segment. Over 287-325 (NTEFLLNALVQNVGDYLSRFPSLALESFAFDQPKEWMNS) the chain is Periplasmic. The chain crosses the membrane as a helical span at residues 326-346 (WTLFFWAWWVAWSPFVGLFLA). The Cytoplasmic portion of the chain corresponds to 347–356 (RISRGRTIRE). A helical membrane pass occupies residues 357 to 377 (FVSGTLIIPLLFTLTWLSIFG). At 378–412 (NSALHNVIFDGNIALAETVLSNPAHGFYDLLAQYP) the chain is on the periplasmic side. The helical transmembrane segment at 413–433 (WFPFIAGVATITGLLFYVTSA) threads the bilayer. The Cytoplasmic portion of the chain corresponds to 434–459 (DSGALVLGNFTTQFTNIDHDAPRWLS). A helical transmembrane segment spans residues 460 to 480 (VFWAVAIGLLTLAMLMTNGIT). The Periplasmic segment spans residues 481–484 (ALQN). The helical transmembrane segment at 485 to 505 (ATIIMGLPFSFVMFLVMAGLY) threads the bilayer. Topologically, residues 506-686 (KSLRLEDYRQ…NRPLFPDPKA (181 aa)) are cytoplasmic.

Belongs to the BCCT transporter (TC 2.A.15) family.

It localises to the cell inner membrane. Its function is as follows. Uptake of choline in the presence of high salinity. May primarily serve for osmoprotection. The sequence is that of Osmo-dependent choline transporter BetT2 from Acinetobacter baylyi (strain ATCC 33305 / BD413 / ADP1).